Consider the following 35-residue polypeptide: Photosystem II reaction center protein T (35 aa).

A helical transmembrane segment spans residues 3-23 (AFAYTLLMTLVVATLFFAVAF).

Belongs to the PsbT family. As to quaternary structure, PSII is composed of 1 copy each of membrane proteins PsbA, PsbB, PsbC, PsbD, PsbE, PsbF, PsbH, PsbI, PsbJ, PsbK, PsbL, PsbM, PsbT, PsbX, PsbY, Psb30/Ycf12, peripheral proteins PsbO, CyanoQ (PsbQ), PsbU, PsbV and a large number of cofactors. It forms dimeric complexes.

It localises to the cellular thylakoid membrane. Found at the monomer-monomer interface of the photosystem II (PS II) dimer, plays a role in assembly and dimerization of PSII. PSII is a light-driven water plastoquinone oxidoreductase, using light energy to abstract electrons from H(2)O, generating a proton gradient subsequently used for ATP formation. The protein is Photosystem II reaction center protein T of Prochlorococcus marinus (strain MIT 9303).